The sequence spans 195 residues: Nucleoside triphosphate pyrophosphatase (195 aa).

The Proton acceptor role is filled by Asp70.

This sequence belongs to the Maf family. It depends on a divalent metal cation as a cofactor.

Its subcellular location is the cytoplasm. The catalysed reaction is a ribonucleoside 5'-triphosphate + H2O = a ribonucleoside 5'-phosphate + diphosphate + H(+). It carries out the reaction a 2'-deoxyribonucleoside 5'-triphosphate + H2O = a 2'-deoxyribonucleoside 5'-phosphate + diphosphate + H(+). Nucleoside triphosphate pyrophosphatase. May have a dual role in cell division arrest and in preventing the incorporation of modified nucleotides into cellular nucleic acids. In Cyanothece sp. (strain PCC 7425 / ATCC 29141), this protein is Nucleoside triphosphate pyrophosphatase.